The primary structure comprises 930 residues: Isoleucine--tRNA ligase (930 aa).

Positions 57–67 (PYANGNIHVGH) match the 'HIGH' region motif. Residue glutamate 554 coordinates L-isoleucyl-5'-AMP. A 'KMSKS' region motif is present at residues 595–599 (KMSKS). Lysine 598 provides a ligand contact to ATP. Residues cysteine 888, cysteine 891, cysteine 908, and cysteine 911 each contribute to the Zn(2+) site.

The protein belongs to the class-I aminoacyl-tRNA synthetase family. IleS type 1 subfamily. Monomer. It depends on Zn(2+) as a cofactor.

It is found in the cytoplasm. The catalysed reaction is tRNA(Ile) + L-isoleucine + ATP = L-isoleucyl-tRNA(Ile) + AMP + diphosphate. Catalyzes the attachment of isoleucine to tRNA(Ile). As IleRS can inadvertently accommodate and process structurally similar amino acids such as valine, to avoid such errors it has two additional distinct tRNA(Ile)-dependent editing activities. One activity is designated as 'pretransfer' editing and involves the hydrolysis of activated Val-AMP. The other activity is designated 'posttransfer' editing and involves deacylation of mischarged Val-tRNA(Ile). This is Isoleucine--tRNA ligase from Streptococcus gordonii (strain Challis / ATCC 35105 / BCRC 15272 / CH1 / DL1 / V288).